The following is a 606-amino-acid chain: Atypical protein kinase C (606 aa).

Residues 30–113 enclose the PB1 domain; the sequence is SITVKTAYNG…SQLVIHVFPN (84 aa). Residues 145 to 195 form a Phorbol-ester/DAG-type zinc finger; the sequence is GHIFQAKRFNRRAFCAYCQDRIWGLGRQGFKCIQCKLLVHKKCHKLVQKHC. A Protein kinase domain is found at 264-532; that stretch reads FELIRVIGRG…FMDIVSHPFF (269 aa). Residues 270-278 and lysine 293 contribute to the ATP site; that span reads IGRGSYAKV. Catalysis depends on aspartate 388, which acts as the Proton acceptor. The 72-residue stretch at 533–604 folds into the AGC-kinase C-terminal domain; that stretch reads KNMDWELLER…VNPLLMSLED (72 aa).

This sequence belongs to the protein kinase superfamily. AGC Ser/Thr protein kinase family. PKC subfamily. As to quaternary structure, interacts with baz; the interaction is required for apical localization of aPKC in neuroblasts and epithelial cells. Interacts with Dap160; the interaction promotes aPKC apical localization and kinase activity. Interacts with and phosphorylates l(2)gl and yrt. Interacts with crb and ref(2)P. Forms a complex with baz, fz and Patj. As to expression, expressed in the testis. In spermatid cysts, localizes near the tips of spermatid flagellar axonemes (at protein level). Detectable in freshly laid eggs before onset of zygotic transcription so is deposited in the egg during oogenesis. At the cellular blastoderm stage, present in all cells except the pole cells. During gastrulation, strongly expressed in tissues undergoing morphogenetic movements such as invaginating mesoderm, proctodeum and cephalic furrow. Strongly expressed in neuroblasts.

It localises to the cytoplasm. The protein localises to the cell cortex. It is found in the apicolateral cell membrane. It catalyses the reaction L-seryl-[protein] + ATP = O-phospho-L-seryl-[protein] + ADP + H(+). The catalysed reaction is L-threonyl-[protein] + ATP = O-phospho-L-threonyl-[protein] + ADP + H(+). Its function is as follows. Serine/threonine protein kinase which is required for apico-basal cell polarity in the germ line as well as in epithelial and neural precursor cells, for epithelial planar cell polarity and for cell proliferation. During oocyte development, required for the posterior translocation of oocyte specification factors and for the posterior establishment of the microtubule organizing center within the presumptive oocyte. Phosphorylates l(2)gl which restricts l(2)gl activity to the oocyte posterior and regulates posterior enrichment of par-1, leading to establishment of correct oocyte polarity. Essential for apical localization of l(2)gl and par-6 in neuroblasts and for exclusion of mira from the apical cortex. Phosphorylates baz which is required for targeting of baz to the postsynaptic region where it is involved in actin organization, and for apical exclusion of baz which is necessary for establishment of the apical/lateral border in epithelial cells. Phosphorylates yrt which prevents its premature apical localization and is necessary for correct epithelial cell polarization. Required for the establishment of mitotic spindle orientation during symmetric division of epithelial cells and for apical exclusion of raps/Pins. Involved in symmetric adherens junction positioning during embryogenesis. Required for polarization of the spermatid cyst which is necessary for sperm differentiation. Required for stimulation of the Toll signaling pathway which activates Dif and dl and plays a role in innate immunity. Plays a role in memory enhancement. This chain is Atypical protein kinase C, found in Drosophila melanogaster (Fruit fly).